The following is a 256-amino-acid chain: MTAASSPHPGVSAEDIEFYQANGYLRLPQEAHGLFDDLAKLQAWVAEISQWGLETGKWRHYYETTNGKHLLWGTEKLMEYHAPMRDLIAGEAPLTLLKSLTGKDMVVFKDEIGWKLPGGKGAVPHLDRPAYSMFAPEFIEIMIAVDAHTVENGCLQFVPGSHKEAVPISADGRIASAWLEGKEFIPMVLDPGDVLIFNESMAHRLDPNKTDQRRAAVFGTYHFDRSQPDLRDKFYAHRLIHSPPENAWVETVEAQT.

H125, D127, and H203 together coordinate Fe cation.

It belongs to the PhyH family. In terms of assembly, homodimer. It depends on Fe cation as a cofactor.

Its pathway is alkaloid biosynthesis. Functionally, dioxygenase; part of the gene cluster that mediates the biosynthesis of loline alkaloids, potent insecticidal agents composed of a pyrrolizidine ring system and an uncommon ether bridge linking carbons 2 and 7. Lolines are structurally differentiated by the various modifications of the L-amino group and include norloline, loline, N-methylloline, N-acetylloline, N-acetylnorloline, and N-formylloline. The first committed step is the condensation of O-acetyl-L-homoserine (derived from L-aspartic acid) and L-proline, probably catalyzed by the gamma-type pyridoxal 5'-phosphate(PLP)-dependent enzyme lolC, to give the diamino diacid, NACPP. Ensuing cyclization, decarboxylation, and acetylation steps yield 1-exo-acetamidopyrrolizidine (AcAP). LolO is required for installation of the ether bridge upon the pathway intermediate, 1-exo-acetamidopyrrolizidine (AcAP). In sequential 2-oxoglutarate- and O(2)-consuming steps, lolO removes hydrogens from C2 and C7 of AcAP to form both carbon-oxygen bonds in N-acetylnorloline (NANL), the precursor to all other lolines. The enzymes lolD, lolE, lolF and lolT have also been proposed to be involved in the ether-bridge installation. Further processing of the exocyclic moiety of NANL by fungal N-acetamidase (LolN), methyltransferase (LolM), and cytochrome P450 (LolP) enzymes, with occasional involvement of a plant acetyltransferase, generates the other known lolines. LolN transforms NANL to norlonine which is monomethylated and dimethylated to respectively lonine and N-methyllonine (NML) by lolM. LolP catalyzes hydroxylation of the methyl group in N-methylloline (NML) and further oxygenation to N-formylloline (NFL). A plant acetyltransferase is responsible for the acetylation of loline to form N-acetylloline (NAL). LolA might interact with aspartate kinase to prevent feedback inhibition of its activity by these end products and thereby promote production of L-homoserine from L-aspartate. The protein is Dioxygenase lolE1 of Epichloe uncinata (Endophyte fungus).